The following is a 475-amino-acid chain: Sulfate adenylyltransferase subunit 1 (475 aa).

The tr-type G domain maps to 25–239; the sequence is KSLLRFLTCG…EVLETVEIQR (215 aa). The segment at 34 to 41 is G1; sequence GSVDDGKS. 34 to 41 contacts GTP; sequence GSVDDGKS. Residues 92–96 form a G2 region; the sequence is GITID. The G3 stretch occupies residues 113 to 116; that stretch reads DTPG. Residues 113 to 117 and 168 to 171 contribute to the GTP site; these read DTPGH and NKMD. Residues 168-171 form a G4 region; the sequence is NKMD. A G5 region spans residues 206–208; sequence SAL.

The protein belongs to the TRAFAC class translation factor GTPase superfamily. Classic translation factor GTPase family. CysN/NodQ subfamily. Heterodimer composed of CysD, the smaller subunit, and CysN.

The enzyme catalyses sulfate + ATP + H(+) = adenosine 5'-phosphosulfate + diphosphate. The protein operates within sulfur metabolism; hydrogen sulfide biosynthesis; sulfite from sulfate: step 1/3. With CysD forms the ATP sulfurylase (ATPS) that catalyzes the adenylation of sulfate producing adenosine 5'-phosphosulfate (APS) and diphosphate, the first enzymatic step in sulfur assimilation pathway. APS synthesis involves the formation of a high-energy phosphoric-sulfuric acid anhydride bond driven by GTP hydrolysis by CysN coupled to ATP hydrolysis by CysD. The polypeptide is Sulfate adenylyltransferase subunit 1 (Shigella flexneri serotype 5b (strain 8401)).